Reading from the N-terminus, the 178-residue chain is PRA1 family protein 2 (178 aa).

The Cytoplasmic portion of the chain corresponds to 1–41; it reads MSEVRLPPLRALDDFVLGSARLVAPDPCDPQRWCHRVINNL. The helical transmembrane segment at 42–62 threads the bilayer; sequence LYYQTNYLICFGLGLALAGYV. The Extracellular portion of the chain corresponds to 63–64; that stretch reads RP. The helical transmembrane segment at 65–85 threads the bilayer; that stretch reads LHTLLSALVVAVALGMLVCAA. Topologically, residues 86-96 are cytoplasmic; that stretch reads ENRAAVRRCRR. A helical transmembrane segment spans residues 97-119; the sequence is SHPAACLAAVLAVGFLVLWAAGG. Over 120–122 the chain is Extracellular; it reads AGT. Residues 123-140 traverse the membrane as a helical segment; sequence FLLSIAGPVLLILVHASL. The Cytoplasmic segment spans residues 141–178; the sequence is RLRNLKNKIENKIESIGLKRTPMGLLLEALGQEQEAGS.

This sequence belongs to the PRA1 family. Interacts with CCR5 and GDE1.

The protein localises to the endosome membrane. In terms of biological role, may be involved in ER/Golgi transport and vesicular traffic. Plays a proapoptotic role in cerulenin-induced neuroblastoma apoptosis. This Bos taurus (Bovine) protein is PRA1 family protein 2 (PRAF2).